The following is a 276-amino-acid chain: Small ribosomal subunit protein uS2 (276 aa).

The interval 226–276 is disordered; sequence KKAREERQLAAAREAAGEPKSEDAPAEAAATEEAPATEAPAAEAQQENAAE. Positions 251–276 are enriched in low complexity; sequence AEAAATEEAPATEAPAAEAQQENAAE.

It belongs to the universal ribosomal protein uS2 family.

This is Small ribosomal subunit protein uS2 from Corynebacterium efficiens (strain DSM 44549 / YS-314 / AJ 12310 / JCM 11189 / NBRC 100395).